The following is a 509-amino-acid chain: Maturase K (509 aa).

It belongs to the intron maturase 2 family. MatK subfamily.

Its subcellular location is the plastid. It localises to the chloroplast. Its function is as follows. Usually encoded in the trnK tRNA gene intron. Probably assists in splicing its own and other chloroplast group II introns. The sequence is that of Maturase K from Atropa belladonna (Belladonna).